A 314-amino-acid chain; its full sequence is 4-hydroxy-3-methylbut-2-enyl diphosphate reductase (314 aa).

C12 serves as a coordination point for [4Fe-4S] cluster. Residues H41 and H74 each coordinate (2E)-4-hydroxy-3-methylbut-2-enyl diphosphate. 2 residues coordinate dimethylallyl diphosphate: H41 and H74. Isopentenyl diphosphate contacts are provided by H41 and H74. Residue C96 participates in [4Fe-4S] cluster binding. H124 is a binding site for (2E)-4-hydroxy-3-methylbut-2-enyl diphosphate. A dimethylallyl diphosphate-binding site is contributed by H124. H124 provides a ligand contact to isopentenyl diphosphate. The active-site Proton donor is E126. Residue T167 participates in (2E)-4-hydroxy-3-methylbut-2-enyl diphosphate binding. C197 is a [4Fe-4S] cluster binding site. Residues S225, S226, N227, and S269 each contribute to the (2E)-4-hydroxy-3-methylbut-2-enyl diphosphate site. Dimethylallyl diphosphate is bound by residues S225, S226, N227, and S269. Isopentenyl diphosphate-binding residues include S225, S226, N227, and S269.

The protein belongs to the IspH family. The cofactor is [4Fe-4S] cluster.

The enzyme catalyses isopentenyl diphosphate + 2 oxidized [2Fe-2S]-[ferredoxin] + H2O = (2E)-4-hydroxy-3-methylbut-2-enyl diphosphate + 2 reduced [2Fe-2S]-[ferredoxin] + 2 H(+). It catalyses the reaction dimethylallyl diphosphate + 2 oxidized [2Fe-2S]-[ferredoxin] + H2O = (2E)-4-hydroxy-3-methylbut-2-enyl diphosphate + 2 reduced [2Fe-2S]-[ferredoxin] + 2 H(+). The protein operates within isoprenoid biosynthesis; dimethylallyl diphosphate biosynthesis; dimethylallyl diphosphate from (2E)-4-hydroxy-3-methylbutenyl diphosphate: step 1/1. It participates in isoprenoid biosynthesis; isopentenyl diphosphate biosynthesis via DXP pathway; isopentenyl diphosphate from 1-deoxy-D-xylulose 5-phosphate: step 6/6. Catalyzes the conversion of 1-hydroxy-2-methyl-2-(E)-butenyl 4-diphosphate (HMBPP) into a mixture of isopentenyl diphosphate (IPP) and dimethylallyl diphosphate (DMAPP). Acts in the terminal step of the DOXP/MEP pathway for isoprenoid precursor biosynthesis. The sequence is that of 4-hydroxy-3-methylbut-2-enyl diphosphate reductase from Glaesserella parasuis serovar 5 (strain SH0165) (Haemophilus parasuis).